Here is a 125-residue protein sequence, read N- to C-terminus: Large ribosomal subunit protein bL12 (125 aa).

The protein belongs to the bacterial ribosomal protein bL12 family. As to quaternary structure, homodimer. Part of the ribosomal stalk of the 50S ribosomal subunit. Forms a multimeric L10(L12)X complex, where L10 forms an elongated spine to which 2 to 4 L12 dimers bind in a sequential fashion. Binds GTP-bound translation factors.

In terms of biological role, forms part of the ribosomal stalk which helps the ribosome interact with GTP-bound translation factors. Is thus essential for accurate translation. This chain is Large ribosomal subunit protein bL12, found in Rhizobium johnstonii (strain DSM 114642 / LMG 32736 / 3841) (Rhizobium leguminosarum bv. viciae).